The following is a 290-amino-acid chain: Putative beta-lactamase HcpC (290 aa).

Positions 1-25 (MLENVKKSFFRVLCLGALCLGGLMA) are cleaved as a signal peptide. TPR repeat units follow at residues 29–62 (PKEL…KENS), 64–98 (CFNL…NYSN), 100–133 (CHLL…LKYA), 134–170 (EGCA…NDGD), 172–205 (CTIL…LKDS), 206–242 (PGCF…ENGG), and 244–278 (CFNL…GAKG). 7 disulfides stabilise this stretch: C56–C64, C92–C100, C128–C136, C164–C172, C200–C208, C236–C244, and C272–C280.

This sequence belongs to the hcp beta-lactamase family.

It is found in the secreted. The enzyme catalyses a beta-lactam + H2O = a substituted beta-amino acid. Functionally, may hydrolyze 6-aminopenicillinic acid and 7-aminocephalosporanic acid (ACA) derivatives. This chain is Putative beta-lactamase HcpC (hcpC), found in Helicobacter pylori (strain ATCC 700392 / 26695) (Campylobacter pylori).